The primary structure comprises 1035 residues: Retinoblastoma-related protein (1035 aa).

Residues 403–426 form a disordered region; it reads ITSPLSPHRSPASHANGIPGSANS. The tract at residues 431-632 is domain A; the sequence is TPVSTAMTTA…EKGSSLYNSL (202 aa). A pocket region spans residues 431 to 885; the sequence is TPVSTAMTTA…NEIFIPAAKP (455 aa). The interval 633–753 is spacer; sequence TVARPALSAE…PGGGGETCAE (121 aa). 2 disordered regions span residues 674 to 697 and 721 to 748; these read PSLQ…PKRP and GNLK…GGGG. Positions 754 to 885 are domain B; sequence TGINVFFTKI…NEIFIPAAKP (132 aa).

It belongs to the retinoblastoma protein (RB) family.

It localises to the nucleus. Functionally, regulator of biological processes that recruits a histone deacetylase to control gene transcription. May play a role in the entry into mitosis, negatively regulating the cell proliferation. Formation of stable complexes with geminiviridae replication-associated proteins may create a cellular environment which favors viral DNA replication. The protein is Retinoblastoma-related protein (RBL901) of Populus trichocarpa (Western balsam poplar).